We begin with the raw amino-acid sequence, 101 residues long: Chaperone modulatory protein CbpM (101 aa).

It belongs to the CbpM family.

In terms of biological role, interacts with CbpA and inhibits both the DnaJ-like co-chaperone activity and the DNA binding activity of CbpA. Together with CbpA, modulates the activity of the DnaK chaperone system. Does not inhibit the co-chaperone activity of DnaJ. The protein is Chaperone modulatory protein CbpM of Citrobacter koseri (strain ATCC BAA-895 / CDC 4225-83 / SGSC4696).